A 328-amino-acid polypeptide reads, in one-letter code: Malate dehydrogenase (328 aa).

Gly11–Gly17 lines the NAD(+) pocket. Substrate is bound by residues Arg94 and Arg100. Residues Asn107, Gln114, and Val131 to Asn133 contribute to the NAD(+) site. The substrate site is built by Asn133 and Arg164. His189 serves as the catalytic Proton acceptor.

Belongs to the LDH/MDH superfamily. MDH type 2 family.

It catalyses the reaction (S)-malate + NAD(+) = oxaloacetate + NADH + H(+). Catalyzes the reversible oxidation of malate to oxaloacetate. In Xanthomonas campestris pv. campestris (strain B100), this protein is Malate dehydrogenase.